A 279-amino-acid polypeptide reads, in one-letter code: Acyl-coenzyme A thioesterase MBLAC2 (279 aa).

N-acetylserine is present on Ser-2. His-83, His-85, Asp-87, His-88, His-170, Asp-189, and His-231 together coordinate Zn(2+). Residue Cys-254 is the site of S-palmitoyl cysteine attachment.

This sequence belongs to the metallo-beta-lactamase superfamily. Glyoxalase II family. Zn(2+) is required as a cofactor. Post-translationally, palmitoylated on Cys-254 by ZDHHC20.

The protein localises to the endoplasmic reticulum membrane. Its subcellular location is the cell membrane. It catalyses the reaction hexadecanoyl-CoA + H2O = hexadecanoate + CoA + H(+). The enzyme catalyses dodecanoyl-CoA + H2O = dodecanoate + CoA + H(+). The catalysed reaction is tetradecanoyl-CoA + H2O = tetradecanoate + CoA + H(+). It carries out the reaction octadecanoyl-CoA + H2O = octadecanoate + CoA + H(+). It catalyses the reaction a beta-lactam + H2O = a substituted beta-amino acid. In terms of biological role, acyl-CoA thioesterases are a group of enzymes that catalyze the hydrolysis of acyl-CoAs to the free fatty acid and coenzyme A (CoASH), providing the potential to regulate intracellular levels of acyl-CoAs, free fatty acids and CoASH. Has an acyl-CoA thioesterase activity towards the long chain fatty acyl-CoA thioester palmitoyl-CoA (hexadecanoyl-CoA; C16:0-CoA). Displays a substrate preference for fatty acyl-CoAs with chain-lengths C12-C18. In Bos taurus (Bovine), this protein is Acyl-coenzyme A thioesterase MBLAC2 (MBLAC2).